Consider the following 291-residue polypeptide: Homoserine kinase (291 aa).

80–90 (PLARGLGSSST) is a binding site for ATP.

It belongs to the GHMP kinase family. Homoserine kinase subfamily.

It localises to the cytoplasm. It carries out the reaction L-homoserine + ATP = O-phospho-L-homoserine + ADP + H(+). The protein operates within amino-acid biosynthesis; L-threonine biosynthesis; L-threonine from L-aspartate: step 4/5. Its function is as follows. Catalyzes the ATP-dependent phosphorylation of L-homoserine to L-homoserine phosphate. The sequence is that of Homoserine kinase from Lactiplantibacillus plantarum (strain ATCC BAA-793 / NCIMB 8826 / WCFS1) (Lactobacillus plantarum).